Consider the following 699-residue polypeptide: Elongation factor G (699 aa).

The 276-residue stretch at 8–283 (EHIRNIGICA…AVVDFLPSPI (276 aa)) folds into the tr-type G domain. Residues 17–24 (AHIDAGKT), 81–85 (DTPGH), and 135–138 (NKMD) each bind GTP.

It belongs to the TRAFAC class translation factor GTPase superfamily. Classic translation factor GTPase family. EF-G/EF-2 subfamily.

The protein resides in the cytoplasm. Functionally, catalyzes the GTP-dependent ribosomal translocation step during translation elongation. During this step, the ribosome changes from the pre-translocational (PRE) to the post-translocational (POST) state as the newly formed A-site-bound peptidyl-tRNA and P-site-bound deacylated tRNA move to the P and E sites, respectively. Catalyzes the coordinated movement of the two tRNA molecules, the mRNA and conformational changes in the ribosome. This chain is Elongation factor G, found in Rickettsia africae (strain ESF-5).